The primary structure comprises 100 residues: uncharacterized protein (100 aa).

Residues 1 to 26 (MKRLLVSLRVWMVFLMNWVTPDRKTA) form the signal peptide.

This is an uncharacterized protein from Bacillus subtilis (strain 168).